A 582-amino-acid chain; its full sequence is Heterogeneous nuclear ribonucleoprotein C homolog (582 aa).

Residues 1 to 21 are disordered; the sequence is MSEALETGDPSPPPPIVSENG. C2H2-type zinc fingers lie at residues 102–125, 130–154, and 213–235; these read YYCC…RGYH, SSCD…RRTH, and YACL…VEMH.

It is found in the nucleus. The protein is Heterogeneous nuclear ribonucleoprotein C homolog of Caenorhabditis elegans.